The primary structure comprises 511 residues: Synaptotagmin-6 (511 aa).

At 1–59 the chain is on the vesicular side; that stretch reads MSGVWGAGGPRCQAALAVLASLCRARPPPLGLDVETCRSFELQSPEQSPSAADSGTSVS. Residues 12-38 form a cysteine motif region; that stretch reads CQAALAVLASLCRARPPPLGLDVETCR. The helical transmembrane segment at 60–80 threads the bilayer; it reads LLAVVVIVCGVALVAVFLFLF. Residues 81 to 511 are Cytoplasmic-facing; that stretch reads WKLCWMPWRK…KSFKEGTPRL (431 aa). 2 disordered regions span residues 92–119 and 157–182; these read EASS…ADKL and TKLQ…LPRQ. Residues 94–103 show a composition bias toward low complexity; that stretch reads SSPSSANPAS. Composition is skewed to polar residues over residues 104 to 113 and 160 to 172; these read ETLQSPSSRG and QRQT…STRH. The residue at position 217 (S217) is a Phosphoserine. 2 consecutive C2 domains span residues 230-351 and 362-495; these read SCGK…SIWK and DLGE…AHWH. Ca(2+)-binding residues include D261, D267, D319, F320, D321, S324, D327, D393, D399, D453, and D455. Residues 483–511 are necessary for cell membrane association (isoform 2); the sequence is MLAYPRKPIAHWHSLVEVKKSFKEGTPRL.

Belongs to the synaptotagmin family. As to quaternary structure, isoform 1: Homodimer; disulfide-linked via the cysteine motif. Isoform 1: Can also form heterodimers with SYT3, SYT7, SYT9 and SYT10. Isoform 1: Interacts with STX1A, STX1B and STX2; the interaction is Ca(2+)-dependent. Isoform 2: Is not able to form homodimer and heterodimers. Requires Ca(2+) as cofactor. Isoform 1 is expressed in the olfactory bulb. Isoform 2 is expressed in the brain (at protein level).

It localises to the cytoplasmic vesicle. The protein localises to the secretory vesicle. The protein resides in the synaptic vesicle membrane. It is found in the membrane. Its subcellular location is the cytoplasm. It localises to the cytosol. The protein localises to the cell membrane. Its function is as follows. May be involved in Ca(2+)-dependent exocytosis of secretory vesicles through Ca(2+) and phospholipid binding to the C2 domain or may serve as Ca(2+) sensors in the process of vesicular trafficking and exocytosis. May mediate Ca(2+)-regulation of exocytosis in acrosomal reaction in sperm. This Mus musculus (Mouse) protein is Synaptotagmin-6 (Syt6).